The primary structure comprises 145 residues: MMDVNEIRQYLPHRYPFLLVDRIVEINLNDSIIAYKNVTINEPFFNGHFPNHPVMPGVLIIEAMAQAAGVLGFKSMDKKPEDGSIYYFVGADNARFKRPVVPGDRLQLEAKIIAEKRGIWKFECRATVDGQLACSATIMCADRKI.

The active site involves His48.

Belongs to the thioester dehydratase family. FabZ subfamily.

It is found in the cytoplasm. It carries out the reaction a (3R)-hydroxyacyl-[ACP] = a (2E)-enoyl-[ACP] + H2O. Functionally, involved in unsaturated fatty acids biosynthesis. Catalyzes the dehydration of short chain beta-hydroxyacyl-ACPs and long chain saturated and unsaturated beta-hydroxyacyl-ACPs. This chain is 3-hydroxyacyl-[acyl-carrier-protein] dehydratase FabZ, found in Marinomonas sp. (strain MWYL1).